Reading from the N-terminus, the 394-residue chain is Metal tolerance protein 11 (394 aa).

Residues 1–103 lie on the Cytoplasmic side of the membrane; the sequence is MVEPASPDSD…EQDNLAKSET (103 aa). Residues 104–124 traverse the membrane as a helical segment; it reads LAIRISNIANMLLFAAKVYAS. Residues 125–130 are Vacuolar-facing; that stretch reads VTSGSL. Residues 131–151 traverse the membrane as a helical segment; sequence AIIASTLDSLLDLLSGFILWF. At 152–172 the chain is on the cytoplasmic side; it reads TAFSMQTPNPYQYPIGKKRMQ. Residues 173–193 form a helical membrane-spanning segment; sequence PLGILVFASVMATLGLQIILE. Topologically, residues 194–212 are vacuolar; that stretch reads SLRTMLSSHKEFNLTKEQE. A helical membrane pass occupies residues 213–233; sequence SWVVGIMLSVTLVKLLLVLYC. Over 234–251 the chain is Cytoplasmic; sequence RSFTNEIVKAYAQDHFFD. A helical membrane pass occupies residues 252-272; the sequence is VITNIIGLIAVILANYIDYWI. Position 273 (Asp273) is a topological domain, vacuolar. A helical membrane pass occupies residues 274 to 294; the sequence is PVGAIILALYTIRTWSMTVLE. Over 295–394 the chain is Cytoplasmic; sequence NVNSLVGKSA…HKPEHARSHC (100 aa).

It belongs to the cation diffusion facilitator (CDF) transporter (TC 2.A.4) family. SLC30A subfamily. In terms of tissue distribution, widely expressed.

It localises to the prevacuolar compartment membrane. It is found in the golgi apparatus membrane. Cation/proton antiporter involved in endogenous manganese tolerance probably through vesicular trafficking and exocytosis. The chain is Metal tolerance protein 11 (MTP11) from Arabidopsis thaliana (Mouse-ear cress).